The sequence spans 2289 residues: Protein Ycf2 (2289 aa).

1643 to 1650 (GSIGTGRS) contacts ATP.

This sequence belongs to the Ycf2 family.

It localises to the plastid. The protein localises to the chloroplast stroma. Its function is as follows. Probable ATPase of unknown function. Its presence in a non-photosynthetic plant (Epifagus virginiana) and experiments in tobacco indicate that it has an essential function which is probably not related to photosynthesis. The polypeptide is Protein Ycf2 (Capsella bursa-pastoris (Shepherd's purse)).